Reading from the N-terminus, the 289-residue chain is Serine/threonine-protein phosphatase Pgam5, mitochondrial (289 aa).

The chain crosses the membrane as a helical span at residues 7–23; sequence LVCGAGAGLAAFYLSRL.

This sequence belongs to the phosphoglycerate mutase family. BPG-dependent PGAM subfamily. Interacts with Pk92B/ASK1.

The protein resides in the mitochondrion outer membrane. The enzyme catalyses O-phospho-L-seryl-[protein] + H2O = L-seryl-[protein] + phosphate. It carries out the reaction O-phospho-L-threonyl-[protein] + H2O = L-threonyl-[protein] + phosphate. Its function is as follows. Displays phosphatase activity for serine/threonine residues, and dephosphorylates and activates Pk92B kinase. Has apparently no phosphoglycerate mutase activity. This chain is Serine/threonine-protein phosphatase Pgam5, mitochondrial, found in Drosophila ananassae (Fruit fly).